The primary structure comprises 160 residues: Cyclic pyranopterin monophosphate synthase (160 aa).

Residues 77–79 and 114–115 contribute to the substrate site; these read MCH and ME. Asp-129 is an active-site residue.

It belongs to the MoaC family. As to quaternary structure, homohexamer; trimer of dimers.

It catalyses the reaction (8S)-3',8-cyclo-7,8-dihydroguanosine 5'-triphosphate = cyclic pyranopterin phosphate + diphosphate. The protein operates within cofactor biosynthesis; molybdopterin biosynthesis. Functionally, catalyzes the conversion of (8S)-3',8-cyclo-7,8-dihydroguanosine 5'-triphosphate to cyclic pyranopterin monophosphate (cPMP). This is Cyclic pyranopterin monophosphate synthase from Listeria innocua serovar 6a (strain ATCC BAA-680 / CLIP 11262).